The sequence spans 90 residues: RNA-binding protein Hfq (90 aa).

The Sm domain maps to aspartate 9–phenylalanine 68.

It belongs to the Hfq family. Homohexamer.

Functionally, RNA chaperone that binds small regulatory RNA (sRNAs) and mRNAs to facilitate mRNA translational regulation in response to envelope stress, environmental stress and changes in metabolite concentrations. Also binds with high specificity to tRNAs. The polypeptide is RNA-binding protein Hfq (Shewanella baltica (strain OS155 / ATCC BAA-1091)).